The chain runs to 263 residues: Hydroxyethylthiazole kinase (263 aa).

Met-39 serves as a coordination point for substrate. ATP contacts are provided by Lys-115 and Thr-160. Gly-187 provides a ligand contact to substrate.

This sequence belongs to the Thz kinase family. The cofactor is Mg(2+).

It carries out the reaction 5-(2-hydroxyethyl)-4-methylthiazole + ATP = 4-methyl-5-(2-phosphooxyethyl)-thiazole + ADP + H(+). It participates in cofactor biosynthesis; thiamine diphosphate biosynthesis; 4-methyl-5-(2-phosphoethyl)-thiazole from 5-(2-hydroxyethyl)-4-methylthiazole: step 1/1. Its function is as follows. Catalyzes the phosphorylation of the hydroxyl group of 4-methyl-5-beta-hydroxyethylthiazole (THZ). The polypeptide is Hydroxyethylthiazole kinase (Staphylococcus saprophyticus subsp. saprophyticus (strain ATCC 15305 / DSM 20229 / NCIMB 8711 / NCTC 7292 / S-41)).